We begin with the raw amino-acid sequence, 387 residues long: Succinate--CoA ligase [ADP-forming] subunit beta (387 aa).

The 236-residue stretch at 9-244 folds into the ATP-grasp domain; the sequence is KQLFAEYGIP…KTQEDETEVL (236 aa). ATP is bound by residues Lys46, 53–55, Gly102, and Glu107; that span reads GRG. Residues Asn199 and Asp213 each coordinate Mg(2+). Substrate contacts are provided by residues Asn264 and 321–323; that span reads GIV.

The protein belongs to the succinate/malate CoA ligase beta subunit family. As to quaternary structure, heterotetramer of two alpha and two beta subunits. Mg(2+) is required as a cofactor.

It carries out the reaction succinate + ATP + CoA = succinyl-CoA + ADP + phosphate. It catalyses the reaction GTP + succinate + CoA = succinyl-CoA + GDP + phosphate. The protein operates within carbohydrate metabolism; tricarboxylic acid cycle; succinate from succinyl-CoA (ligase route): step 1/1. In terms of biological role, succinyl-CoA synthetase functions in the citric acid cycle (TCA), coupling the hydrolysis of succinyl-CoA to the synthesis of either ATP or GTP and thus represents the only step of substrate-level phosphorylation in the TCA. The beta subunit provides nucleotide specificity of the enzyme and binds the substrate succinate, while the binding sites for coenzyme A and phosphate are found in the alpha subunit. The sequence is that of Succinate--CoA ligase [ADP-forming] subunit beta from Xylella fastidiosa (strain 9a5c).